Consider the following 189-residue polypeptide: GTP cyclohydrolase 1 (189 aa).

Zn(2+)-binding residues include Cys-76, His-79, and Cys-149.

The protein belongs to the GTP cyclohydrolase I family. As to quaternary structure, homomer.

It catalyses the reaction GTP + H2O = 7,8-dihydroneopterin 3'-triphosphate + formate + H(+). The protein operates within cofactor biosynthesis; 7,8-dihydroneopterin triphosphate biosynthesis; 7,8-dihydroneopterin triphosphate from GTP: step 1/1. This chain is GTP cyclohydrolase 1, found in Dehalococcoides mccartyi (strain ATCC BAA-2100 / JCM 16839 / KCTC 5957 / BAV1).